Reading from the N-terminus, the 66-residue chain is Large ribosomal subunit protein bL35 (66 aa).

The protein belongs to the bacterial ribosomal protein bL35 family.

The polypeptide is Large ribosomal subunit protein bL35 (Hyphomonas neptunium (strain ATCC 15444)).